We begin with the raw amino-acid sequence, 341 residues long: Protein pelota homolog (341 aa).

Belongs to the eukaryotic release factor 1 family. Pelota subfamily. As to quaternary structure, monomer. It depends on a divalent metal cation as a cofactor.

Its subcellular location is the cytoplasm. May function in recognizing stalled ribosomes, interact with stem-loop structures in stalled mRNA molecules, and effect endonucleolytic cleavage of the mRNA. May play a role in the release non-functional ribosomes and degradation of damaged mRNAs. Has endoribonuclease activity. This Metallosphaera sedula (strain ATCC 51363 / DSM 5348 / JCM 9185 / NBRC 15509 / TH2) protein is Protein pelota homolog.